Here is a 79-residue protein sequence, read N- to C-terminus: Short neurotoxin 3 (79 aa).

The N-terminal stretch at 1–23 (MKTLLLTLVVMTIVCLDLGYTLT) is a signal peptide. 4 cysteine pairs are disulfide-bonded: Cys24-Cys41, Cys34-Cys59, Cys63-Cys71, and Cys72-Cys77.

The protein belongs to the three-finger toxin family. Short-chain subfamily. Expressed by the venom gland.

It is found in the secreted. This is Short neurotoxin 3 from Oxyuranus scutellatus scutellatus (Australian taipan).